Here is a 223-residue protein sequence, read N- to C-terminus: Small ribosomal subunit protein uS3 (223 aa).

In terms of domain architecture, KH type-2 spans 38–106; sequence IREFIAKQLT…RVHINIVEIK (69 aa).

It belongs to the universal ribosomal protein uS3 family. In terms of assembly, part of the 30S ribosomal subunit. Forms a tight complex with proteins S10 and S14.

Functionally, binds the lower part of the 30S subunit head. Binds mRNA in the 70S ribosome, positioning it for translation. The sequence is that of Small ribosomal subunit protein uS3 from Pediococcus pentosaceus (strain ATCC 25745 / CCUG 21536 / LMG 10740 / 183-1w).